We begin with the raw amino-acid sequence, 160 residues long: Small ribosomal subunit protein bS6 (160 aa).

Positions 100-160 are disordered; the sequence is PSSVLARKSD…DDARETAGAE (61 aa). Composition is skewed to basic and acidic residues over residues 106 to 116 and 136 to 160; these read RKSDDRGDRGN and RSSEDREEYRARGEQDDARETAGAE.

Belongs to the bacterial ribosomal protein bS6 family.

Functionally, binds together with bS18 to 16S ribosomal RNA. The polypeptide is Small ribosomal subunit protein bS6 (Gluconobacter oxydans (strain 621H) (Gluconobacter suboxydans)).